The following is a 570-amino-acid chain: Hydroxylamine reductase (570 aa).

[4Fe-4S] cluster contacts are provided by C5, C8, C17, and C23. Hybrid [4Fe-2O-2S] cluster contacts are provided by H266, E290, C334, C425, C453, C478, E513, and K515. At C425 the chain carries Cysteine persulfide.

The protein belongs to the HCP family. The cofactor is [4Fe-4S] cluster. Hybrid [4Fe-2O-2S] cluster is required as a cofactor.

The protein resides in the cytoplasm. It carries out the reaction A + NH4(+) + H2O = hydroxylamine + AH2 + H(+). In terms of biological role, catalyzes the reduction of hydroxylamine to form NH(3) and H(2)O. The sequence is that of Hydroxylamine reductase from Clostridium botulinum (strain 657 / Type Ba4).